The chain runs to 22 residues: leu leader peptide (22 aa).

Residues 1 to 22 (MLHHMTSRANLLLLRRGGSQRS) form a disordered region. Over residues 11–22 (LLLLRRGGSQRS) the composition is skewed to low complexity.

Involved in control of the biosynthesis of leucine. In Corynebacterium glutamicum (strain ATCC 13032 / DSM 20300 / JCM 1318 / BCRC 11384 / CCUG 27702 / LMG 3730 / NBRC 12168 / NCIMB 10025 / NRRL B-2784 / 534), this protein is leu leader peptide (leuL).